The sequence spans 169 residues: Probable calcium-binding protein CML20 (169 aa).

Positions 1–23 (MSSIYRTVSRKEKPRRHHGLTTQ) are disordered. EF-hand domains follow at residues 23–58 (QKKQEIKEAFELFDTDGSGTIDAKELNVAMRALGFE), 59–94 (MTEEQINKMIADVDKDGSGAIDFDEFVHMMTAKIGE), 96–131 (DTKEELTKAFQIIDLDKNGKISPDDIKRMAKDLGEN), and 132–167 (FTDAEIREMVEEADRDRDGEVNMDEFMRMMRRTAYG). Positions 36, 38, 40, 42, 47, 72, 74, 76, 83, 109, 111, 113, 115, 120, 145, 147, 149, 151, and 156 each coordinate Ca(2+).

Interacts with TON1A and TON1B. Interacts with SAC3A and SAC3B. Interacts with UCH1 and UCH2.

Functionally, potential calcium sensor. The sequence is that of Probable calcium-binding protein CML20 from Arabidopsis thaliana (Mouse-ear cress).